The primary structure comprises 337 residues: Probable arabinose 5-phosphate isomerase (337 aa).

Residues 58 to 201 enclose the SIS domain; that stretch reads VIDLILACEG…AVSLITARNF (144 aa). Residues 92 to 93, His99, His105, 131 to 140, 165 to 167, Thr237, and Asp290 contribute to the substrate site; these read GT, KLIPSLKNFG, and TVE. His99 provides a ligand contact to Zn(2+). The CBS 1 domain occupies 227–284; the sequence is MQTRLPTILPTTNFTDCLTVMNEGRMGVALVMENEQLKGIITDGDIRRALTANGAGTL. Positions 292-337 constitute a CBS 2 domain; that stretch reads MTSSPKTIHQDEFLSKAEDFMKAKKIHSLVVVNDENHVVGLVEFSS.

This sequence belongs to the SIS family. GutQ/KpsF subfamily.

The catalysed reaction is D-arabinose 5-phosphate = D-ribulose 5-phosphate. Catalyzes the reversible aldol-ketol isomerization between D-ribulose 5-phosphate (Ru5P) and D-arabinose 5-phosphate (A5P). This chain is Probable arabinose 5-phosphate isomerase, found in Haemophilus influenzae (strain ATCC 51907 / DSM 11121 / KW20 / Rd).